A 117-amino-acid chain; its full sequence is Large ribosomal subunit protein bL19 (117 aa).

It belongs to the bacterial ribosomal protein bL19 family.

This protein is located at the 30S-50S ribosomal subunit interface and may play a role in the structure and function of the aminoacyl-tRNA binding site. The protein is Large ribosomal subunit protein bL19 of Shewanella amazonensis (strain ATCC BAA-1098 / SB2B).